A 163-amino-acid chain; its full sequence is Phosphopantetheine adenylyltransferase (163 aa).

Residue threonine 11 coordinates substrate. ATP is bound by residues 11–12 and histidine 19; that span reads TF. Positions 43, 75, and 89 each coordinate substrate. Residues 90–92, glutamate 100, and 125–131 contribute to the ATP site; these read GLR and YSFISST.

It belongs to the bacterial CoaD family. Homohexamer. The cofactor is Mg(2+).

Its subcellular location is the cytoplasm. It carries out the reaction (R)-4'-phosphopantetheine + ATP + H(+) = 3'-dephospho-CoA + diphosphate. It participates in cofactor biosynthesis; coenzyme A biosynthesis; CoA from (R)-pantothenate: step 4/5. Reversibly transfers an adenylyl group from ATP to 4'-phosphopantetheine, yielding dephospho-CoA (dPCoA) and pyrophosphate. This is Phosphopantetheine adenylyltransferase from Acinetobacter baumannii (strain SDF).